The following is a 469-amino-acid chain: Adenosylhomocysteinase (469 aa).

Substrate contacts are provided by Thr-63, Asp-139, and Glu-164. 165-167 (TTT) lines the NAD(+) pocket. 2 residues coordinate substrate: Lys-194 and Asp-198. NAD(+) contacts are provided by residues Asn-199, 228-233 (GYGDVG), Glu-251, Asn-300, 321-323 (IGH), and Asn-375.

The protein belongs to the adenosylhomocysteinase family. NAD(+) serves as cofactor.

Its subcellular location is the cytoplasm. It carries out the reaction S-adenosyl-L-homocysteine + H2O = L-homocysteine + adenosine. The protein operates within amino-acid biosynthesis; L-homocysteine biosynthesis; L-homocysteine from S-adenosyl-L-homocysteine: step 1/1. Its function is as follows. May play a key role in the regulation of the intracellular concentration of adenosylhomocysteine. The sequence is that of Adenosylhomocysteinase from Pseudomonas putida (strain ATCC 700007 / DSM 6899 / JCM 31910 / BCRC 17059 / LMG 24140 / F1).